Reading from the N-terminus, the 1089-residue chain is Carbamoyl phosphate synthase large chain (1089 aa).

The carboxyphosphate synthetic domain stretch occupies residues 1–399 (MPKRTDIKSI…SIQKALCSLE (399 aa)). 12 residues coordinate ATP: R127, R167, G173, G174, E206, L208, E213, G239, V240, H241, Q283, and E297. The 196-residue stretch at 131–326 (KECMKKIGMD…IAKVATLLAV (196 aa)) folds into the ATP-grasp 1 domain. Mg(2+) is bound by residues Q283, E297, and N299. Mn(2+) is bound by residues Q283, E297, and N299. Residues 400–553 (RSLSGFDRVK…NVSELTQSKN (154 aa)) are oligomerization domain. A carbamoyl phosphate synthetic domain region spans residues 554–951 (DAKDKKEKKV…SYAKSQIASF (398 aa)). One can recognise an ATP-grasp 2 domain in the interval 680-871 (AEFITKLGIN…LAKVATRVMW (192 aa)). Residues R716, Q755, L757, E762, G787, I788, H789, S790, Q830, and E842 each contribute to the ATP site. Mg(2+) contacts are provided by Q830, E842, and N844. Mn(2+) is bound by residues Q830, E842, and N844. Residues 952–1089 (NHLPEQGVVF…VKSLQEWLKS (138 aa)) form the MGS-like domain. The allosteric domain stretch occupies residues 952 to 1089 (NHLPEQGVVF…VKSLQEWLKS (138 aa)).

It belongs to the CarB family. In terms of assembly, composed of two chains; the small (or glutamine) chain promotes the hydrolysis of glutamine to ammonia, which is used by the large (or ammonia) chain to synthesize carbamoyl phosphate. Tetramer of heterodimers (alpha,beta)4. Mg(2+) is required as a cofactor. It depends on Mn(2+) as a cofactor.

It carries out the reaction hydrogencarbonate + L-glutamine + 2 ATP + H2O = carbamoyl phosphate + L-glutamate + 2 ADP + phosphate + 2 H(+). The enzyme catalyses hydrogencarbonate + NH4(+) + 2 ATP = carbamoyl phosphate + 2 ADP + phosphate + 2 H(+). It participates in amino-acid biosynthesis; L-arginine biosynthesis; carbamoyl phosphate from bicarbonate: step 1/1. The protein operates within pyrimidine metabolism; UMP biosynthesis via de novo pathway; (S)-dihydroorotate from bicarbonate: step 1/3. Functionally, large subunit of the glutamine-dependent carbamoyl phosphate synthetase (CPSase). CPSase catalyzes the formation of carbamoyl phosphate from the ammonia moiety of glutamine, carbonate, and phosphate donated by ATP, constituting the first step of 2 biosynthetic pathways, one leading to arginine and/or urea and the other to pyrimidine nucleotides. The large subunit (synthetase) binds the substrates ammonia (free or transferred from glutamine from the small subunit), hydrogencarbonate and ATP and carries out an ATP-coupled ligase reaction, activating hydrogencarbonate by forming carboxy phosphate which reacts with ammonia to form carbamoyl phosphate. The sequence is that of Carbamoyl phosphate synthase large chain from Campylobacter jejuni subsp. jejuni serotype O:2 (strain ATCC 700819 / NCTC 11168).